Consider the following 1084-residue polypeptide: Teashirt homolog 1 (1084 aa).

Disordered regions lie at residues 49-108 (EETE…SVSY), 140-167 (NSAT…TAST), and 269-298 (GHYR…MEME). 2 stretches are compositionally biased toward polar residues: residues 57–71 (QSYQ…TNQD) and 140–152 (NSAT…SQKE). 2 C2H2-type zinc fingers span residues 246 to 270 (FRCK…ETGH) and 307 to 331 (LKCM…KTKH). Over residues 269–284 (GHYRDDNRDKDSEKTK) the composition is skewed to basic and acidic residues. The C2H2-type 3; atypical zinc finger occupies 416-440 (LKCMECGSSHDTLQQLTAHMMVTGH). Disordered stretches follow at residues 467 to 534 (SIPL…EKFE) and 653 to 728 (TGKV…LKAK). 3 stretches are compositionally biased toward basic and acidic residues: residues 496–534 (SEEK…EKFE), 653–671 (TGKV…EKSS), and 681–714 (KENK…ESTL). Position 771 is a phosphoserine (serine 771). The segment at 855 to 879 (GRLTPKSSTPSTVSEKSDADGSSFE) is disordered. Residues 859-868 (PKSSTPSTVS) are compositionally biased toward polar residues. A DNA-binding region (homeobox; atypical) is located at residues 891-961 (RKGRQSNWNP…NVKYQLRRTG (71 aa)). 2 C2H2-type zinc fingers span residues 976-998 (FFCN…LETH) and 1044-1067 (FQCK…SKTH).

The protein belongs to the teashirt C2H2-type zinc-finger protein family. Interacts (via homeobox domain) with APBB1 (via PID domain 1).

The protein localises to the nucleus. Probable transcriptional regulator involved in developmental processes. May act as a transcriptional repressor (Potential). This is Teashirt homolog 1 (Tshz1) from Mus musculus (Mouse).